We begin with the raw amino-acid sequence, 292 residues long: 4-hydroxy-tetrahydrodipicolinate synthase (292 aa).

Threonine 45 serves as a coordination point for pyruvate. Residue tyrosine 133 is the Proton donor/acceptor of the active site. Residue lysine 161 is the Schiff-base intermediate with substrate of the active site. Isoleucine 203 lines the pyruvate pocket.

It belongs to the DapA family. As to quaternary structure, homotetramer; dimer of dimers.

It localises to the cytoplasm. It catalyses the reaction L-aspartate 4-semialdehyde + pyruvate = (2S,4S)-4-hydroxy-2,3,4,5-tetrahydrodipicolinate + H2O + H(+). It functions in the pathway amino-acid biosynthesis; L-lysine biosynthesis via DAP pathway; (S)-tetrahydrodipicolinate from L-aspartate: step 3/4. Functionally, catalyzes the condensation of (S)-aspartate-beta-semialdehyde [(S)-ASA] and pyruvate to 4-hydroxy-tetrahydrodipicolinate (HTPA). This chain is 4-hydroxy-tetrahydrodipicolinate synthase, found in Salmonella arizonae (strain ATCC BAA-731 / CDC346-86 / RSK2980).